We begin with the raw amino-acid sequence, 613 residues long: Portal protein (613 aa).

Residues 577 to 613 (ATGGDHGIRQAPSARGDAEPDHAKSKPARDPPPGAGS) are disordered. Positions 592 to 605 (GDAEPDHAKSKPAR) are enriched in basic and acidic residues.

This sequence belongs to the herpesviridae portal protein family. Homododecamerizes. Interacts with terminase subunits TRM1 and TRM3.

The protein resides in the virion. It localises to the host nucleus. In terms of biological role, forms a portal in the viral capsid through which viral DNA is translocated during DNA packaging. Assembles as a dodecamer at a single fivefold axe of the T=16 icosahedric capsid. Binds to the molecular motor that translocates the viral DNA, termed terminase. The sequence is that of Portal protein from Homo sapiens (Human).